The primary structure comprises 254 residues: Transcription factor bHLH51 (254 aa).

Residues 62–111 (SLSRSHRLAEKRRRDRINSHLTALRKLVPNSDKLDKAALLATVIEQVKEL) enclose the bHLH domain.

As to quaternary structure, homodimer. In terms of tissue distribution, expressed constitutively in roots, stems, and flowers.

Its subcellular location is the nucleus. The polypeptide is Transcription factor bHLH51 (BHLH51) (Arabidopsis thaliana (Mouse-ear cress)).